Reading from the N-terminus, the 367-residue chain is Alanine racemase (367 aa).

Lysine 40 functions as the Proton acceptor; specific for D-alanine in the catalytic mechanism. The residue at position 40 (lysine 40) is an N6-(pyridoxal phosphate)lysine. Arginine 136 lines the substrate pocket. The Proton acceptor; specific for L-alanine role is filled by tyrosine 263. Methionine 310 contributes to the substrate binding site.

The protein belongs to the alanine racemase family. Requires pyridoxal 5'-phosphate as cofactor.

It catalyses the reaction L-alanine = D-alanine. It participates in amino-acid biosynthesis; D-alanine biosynthesis; D-alanine from L-alanine: step 1/1. Its function is as follows. Catalyzes the interconversion of L-alanine and D-alanine. May also act on other amino acids. The sequence is that of Alanine racemase (alr) from Streptococcus pneumoniae (strain ATCC 700669 / Spain 23F-1).